The primary structure comprises 229 residues: MSSETGPVAVDPTLRRRIEPHEFEVFFDPRELRKETCLLYEINWGGRHSVWRHTSQNTSNHVEVNFLEKFTTERYFRPNTRCSITWFLSWSPCGECSRAITEFLSRHPYVTLFIYIARLYHHTDQRNRQGLRDLISSGVTIQIMTEQEYCYCWRNFVNYPPSNEAYWPRYPHLWVKLYVLELYCIILGLPPCLKILRRKQPQLTFFTITLQTCHYQRIPPHLLWATGLK.

Positions Val10–Leu134 constitute a CMP/dCMP-type deaminase domain. Residue His61 coordinates Zn(2+). Glu63 (proton donor) is an active-site residue. Residues Cys93 and Cys96 each contribute to the Zn(2+) site.

It belongs to the cytidine and deoxycytidylate deaminase family. In terms of assembly, homodimer. Interacts with A1CF; form an mRNA editing complex. Interacts with RBM47; form an mRNA editing complex. Found in a complex with CELF2/CUGBP2 and A1CF. Interacts with HNRPAB. Interacts with SYNCRIP. The cofactor is Zn(2+). Expressed in the spleen. Expressed at lower level in the kidney, testis, lung, brain and liver.

It localises to the cytoplasm. The protein resides in the nucleus. It catalyses the reaction a cytidine in mRNA + H2O + H(+) = a uridine in mRNA + NH4(+). The catalysed reaction is cytidine(6666) in apoB mRNA + H2O + H(+) = uridine(6666) in apoB mRNA + NH4(+). Functionally, cytidine deaminase catalyzing the cytidine to uridine postranscriptional editing of a variety of mRNAs. Form complexes with cofactors that confer differential editing activity and selectivity. Responsible for the postranscriptional editing of a CAA codon for Gln to a UAA codon for stop in the apolipoprotein B mRNA. Also involved in CGA (Arg) to UGA (Stop) editing in the NF1 mRNA. May also play a role in the epigenetic regulation of gene expression by participating in DNA demethylation. This Mus musculus (Mouse) protein is C-&gt;U-editing enzyme APOBEC-1.